Reading from the N-terminus, the 188-residue chain is Elongation factor P (188 aa).

Belongs to the elongation factor P family.

The protein localises to the cytoplasm. The protein operates within protein biosynthesis; polypeptide chain elongation. Its function is as follows. Involved in peptide bond synthesis. Stimulates efficient translation and peptide-bond synthesis on native or reconstituted 70S ribosomes in vitro. Probably functions indirectly by altering the affinity of the ribosome for aminoacyl-tRNA, thus increasing their reactivity as acceptors for peptidyl transferase. The sequence is that of Elongation factor P from Bacteroides fragilis (strain ATCC 25285 / DSM 2151 / CCUG 4856 / JCM 11019 / LMG 10263 / NCTC 9343 / Onslow / VPI 2553 / EN-2).